Reading from the N-terminus, the 506-residue chain is Galactose/methyl galactoside import ATP-binding protein MglA (506 aa).

2 consecutive ABC transporter domains span residues 14 to 249 (LEMS…VGRS) and 264 to 506 (VILE…SLHL). ATP is bound at residue 46 to 53 (GENGAGKS).

It belongs to the ABC transporter superfamily. Galactose/methyl galactoside importer (TC 3.A.1.2.3) family. The complex is composed of one ATP-binding protein (MglA), two transmembrane proteins (MglC) and a solute-binding protein (MglB).

It localises to the cell inner membrane. It catalyses the reaction D-galactose(out) + ATP + H2O = D-galactose(in) + ADP + phosphate + H(+). It carries out the reaction methyl beta-D-galactoside(out) + ATP + H2O = methyl beta-D-galactoside(in) + ADP + phosphate + H(+). Part of the ABC transporter complex MglABC involved in galactose/methyl galactoside import. Responsible for energy coupling to the transport system. The polypeptide is Galactose/methyl galactoside import ATP-binding protein MglA (Yersinia pestis bv. Antiqua (strain Antiqua)).